The primary structure comprises 919 residues: Transcriptional regulatory protein EDS1 (919 aa).

The disordered stretch occupies residues 1–54; sequence MSHHVPNLYGTPIRDPHERKRNSASMGEVNQSVSSRNCERGSEKGTKQRKKASR. Residues 23 to 36 are compositionally biased toward polar residues; sequence SASMGEVNQSVSSR. Positions 37-46 are enriched in basic and acidic residues; the sequence is NCERGSEKGT. Positions 56 to 85 form a DNA-binding region, zn(2)-C6 fungal-type; it reads CDQCRRKRIKCRFDKHTGVCQGCLEVGEKC. The interval 297 to 338 is disordered; the sequence is AGCPNKKLGTDGRSDKWDKNSTWKPVYRSSNPSHPSTEKNVS. Residues 304-317 show a composition bias toward basic and acidic residues; sequence LGTDGRSDKWDKNS. Over residues 318–338 the composition is skewed to polar residues; that stretch reads TWKPVYRSSNPSHPSTEKNVS.

Binds DNA in a sequence-specific manner.

Its subcellular location is the nucleus. The chain is Transcriptional regulatory protein EDS1 (EDS1) from Saccharomyces cerevisiae (strain RM11-1a) (Baker's yeast).